A 204-amino-acid polypeptide reads, in one-letter code: Leucyl/phenylalanyl-tRNA--protein transferase (204 aa).

Belongs to the L/F-transferase family.

It localises to the cytoplasm. It carries out the reaction N-terminal L-lysyl-[protein] + L-leucyl-tRNA(Leu) = N-terminal L-leucyl-L-lysyl-[protein] + tRNA(Leu) + H(+). The enzyme catalyses N-terminal L-arginyl-[protein] + L-leucyl-tRNA(Leu) = N-terminal L-leucyl-L-arginyl-[protein] + tRNA(Leu) + H(+). The catalysed reaction is L-phenylalanyl-tRNA(Phe) + an N-terminal L-alpha-aminoacyl-[protein] = an N-terminal L-phenylalanyl-L-alpha-aminoacyl-[protein] + tRNA(Phe). Functions in the N-end rule pathway of protein degradation where it conjugates Leu, Phe and, less efficiently, Met from aminoacyl-tRNAs to the N-termini of proteins containing an N-terminal arginine or lysine. This is Leucyl/phenylalanyl-tRNA--protein transferase from Sinorhizobium medicae (strain WSM419) (Ensifer medicae).